The following is a 273-amino-acid chain: Glucosamine-6-phosphate deaminase (273 aa).

The Proton acceptor; for enolization step role is filled by Asp72. The For ring-opening step role is filled by Asp141. His143 acts as the Proton acceptor; for ring-opening step in catalysis. The active-site For ring-opening step is the Glu148.

This sequence belongs to the glucosamine/galactosamine-6-phosphate isomerase family. In terms of assembly, homohexamer.

It localises to the cytoplasm. It carries out the reaction alpha-D-glucosamine 6-phosphate + H2O = beta-D-fructose 6-phosphate + NH4(+). It functions in the pathway nucleotide-sugar biosynthesis; UDP-N-acetyl-alpha-D-glucosamine biosynthesis; alpha-D-glucosamine 6-phosphate from D-fructose 6-phosphate: step 1/1. Functionally, catalyzes the reversible conversion of alpha-D-glucosamine 6-phosphate (GlcN-6P) into beta-D-fructose 6-phosphate (Fru-6P) and ammonium ion, a regulatory reaction step in de novo uridine diphosphate-N-acetyl-alpha-D-glucosamine (UDP-GlcNAc) biosynthesis via hexosamine pathway. This is Glucosamine-6-phosphate deaminase from Drosophila melanogaster (Fruit fly).